A 269-amino-acid polypeptide reads, in one-letter code: Interleukin-1 beta (269 aa).

A propeptide spanning residues 1–116 (MAEVPELASE…TRNNDACVHD (116 aa)) is cleaved from the precursor.

This sequence belongs to the IL-1 family. In terms of assembly, monomer. In its precursor form, weakly interacts with full-length MEFV; the mature cytokine does not interact at all. Interacts with integrins ITGAV:ITGBV and ITGA5:ITGB1; integrin-binding is required for IL1B signaling. Interacts with cargo receptor TMED10; the interaction is direct and is required for the secretion of IL1B mature form. Interacts with HSP90AB1; the interaction facilitates cargo translocation into the ERGIC. Interacts with HSP90B1; the interaction facilitates cargo translocation into the ERGIC.

The protein resides in the cytoplasm. It localises to the cytosol. It is found in the secreted. Its subcellular location is the lysosome. The protein localises to the extracellular exosome. Its function is as follows. Potent pro-inflammatory cytokine. Initially discovered as the major endogenous pyrogen, induces prostaglandin synthesis, neutrophil influx and activation, T-cell activation and cytokine production, B-cell activation and antibody production, and fibroblast proliferation and collagen production. Promotes Th17 differentiation of T-cells. Synergizes with IL12/interleukin-12 to induce IFNG synthesis from T-helper 1 (Th1) cells. Plays a role in angiogenesis by inducing VEGF production synergistically with TNF and IL6. Involved in transduction of inflammation downstream of pyroptosis: its mature form is specifically released in the extracellular milieu by passing through the gasdermin-D (GSDMD) pore. The protein is Interleukin-1 beta (IL1B) of Macaca nemestrina (Pig-tailed macaque).